Consider the following 366-residue polypeptide: 3-dehydroquinate synthase (366 aa).

NAD(+) is bound by residues 71 to 76, 105 to 109, 129 to 130, lysine 142, lysine 151, and 169 to 172; these read DGEQYK, GVIGD, TT, and CLKT. Residues glutamate 184, histidine 247, and histidine 264 each contribute to the Zn(2+) site.

Belongs to the sugar phosphate cyclases superfamily. Dehydroquinate synthase family. Requires Co(2+) as cofactor. The cofactor is Zn(2+). NAD(+) serves as cofactor.

The protein localises to the cytoplasm. The catalysed reaction is 7-phospho-2-dehydro-3-deoxy-D-arabino-heptonate = 3-dehydroquinate + phosphate. It participates in metabolic intermediate biosynthesis; chorismate biosynthesis; chorismate from D-erythrose 4-phosphate and phosphoenolpyruvate: step 2/7. Functionally, catalyzes the conversion of 3-deoxy-D-arabino-heptulosonate 7-phosphate (DAHP) to dehydroquinate (DHQ). The sequence is that of 3-dehydroquinate synthase from Serratia proteamaculans (strain 568).